The sequence spans 223 residues: Small ribosomal subunit protein uS3 (223 aa).

Residues 38–106 (LKRELKEKLK…EVFIDILEVN (69 aa)) enclose the KH type-2 domain.

The protein belongs to the universal ribosomal protein uS3 family. Part of the 30S ribosomal subunit. Forms a tight complex with proteins S10 and S14.

Functionally, binds the lower part of the 30S subunit head. Binds mRNA in the 70S ribosome, positioning it for translation. This chain is Small ribosomal subunit protein uS3, found in Acidobacterium capsulatum (strain ATCC 51196 / DSM 11244 / BCRC 80197 / JCM 7670 / NBRC 15755 / NCIMB 13165 / 161).